The chain runs to 362 residues: Neutral protease 2 homolog MEP2 (362 aa).

An N-terminal signal peptide occupies residues 1 to 19 (MLFPSIVAALAALANPVLS). The propeptide occupies 20–177 (LTIPQATGSE…SKAINPISAR (158 aa)). Intrachain disulfides connect C184–C255 and C262–C280. H304 is a binding site for Zn(2+). E305 is an active-site residue. Positions 308 and 319 each coordinate Zn(2+).

This sequence belongs to the peptidase M35 family. Zn(2+) is required as a cofactor.

It localises to the secreted. It catalyses the reaction Preferential cleavage of bonds with hydrophobic residues in P1'. Also 3-Asn-|-Gln-4 and 8-Gly-|-Ser-9 bonds in insulin B chain.. Its function is as follows. Secreted metalloproteinase that allows assimilation of proteinaceous substrates. Shows high activities on basic nuclear substrates such as histone and protamine. May be involved in virulence. The protein is Neutral protease 2 homolog MEP2 (MEP2) of Coccidioides posadasii (strain C735) (Valley fever fungus).